A 642-amino-acid chain; its full sequence is Palmitoyltransferase akr1 (642 aa).

ANK repeat units follow at residues 1-29, 33-62, 67-96, 100-129, 133-162, and 166-196; these read MGSL…DVNA, GGAT…DVNA, LQAA…DPLL, QGFN…SVDL, QQHT…DVLA, and DKMT…PCTA. The Cytoplasmic segment spans residues 1 to 256; it reads MGSLFLAASQ…SKFQFSQKTF (256 aa). Helical transmembrane passes span 257–277 and 278–298; these read IIFC…IMSI and CPMV…FKYI. Topologically, residues 299 to 316 are cytoplasmic; the sequence is TTCIHANIDIVHFYLETP. A helical transmembrane segment spans residues 317-337; the sequence is FLAGIFSSIFFWVWCHSLLYI. Residues 338-343 are Lumenal-facing; that stretch reads VPKTLP. Residues 344–364 traverse the membrane as a helical segment; that stretch reads IKPLSSLLFVLISFTCIGLYV. At 365–444 the chain is on the cytoplasmic side; that stretch reads RTAFQNPGYV…NCVGARNHRT (80 aa). The DHHC domain maps to 400 to 450; it reads HYCLKCFQVKPPRSYHCGACKRCINRYDHHCPWTGNCVGARNHRTFLLFVF. Cys-430 (S-palmitoyl cysteine intermediate) is an active-site residue. The helical transmembrane segment at 445–465 threads the bilayer; it reads FLLFVFTLSTLIPIYFYVAFY. Over 466-496 the chain is Lumenal; it reads YLQNIPIQKKYESYRCLFISGTICQWSLKDM. The helical transmembrane segment at 497-517 threads the bilayer; the sequence is FVLVASLTLFVNWCWVVVLAF. The Cytoplasmic portion of the chain corresponds to 518-642; it reads TQICQVAHNV…GRQDEATRHV (125 aa).

The protein belongs to the DHHC palmitoyltransferase family. AKR/ZDHHC17 subfamily.

Its subcellular location is the early endosome membrane. It localises to the golgi apparatus membrane. It carries out the reaction L-cysteinyl-[protein] + hexadecanoyl-CoA = S-hexadecanoyl-L-cysteinyl-[protein] + CoA. Functionally, palmitoyltransferase specific for casein kinase 1. The sequence is that of Palmitoyltransferase akr1 (akr1) from Schizosaccharomyces pombe (strain 972 / ATCC 24843) (Fission yeast).